The sequence spans 289 residues: Ferri-bacillibactin esterase BesA (289 aa).

Catalysis depends on charge relay system residues Ser-163, Glu-225, and His-263.

The protein belongs to the esterase D family.

The protein localises to the cytoplasm. In terms of biological role, catalyzes the hydrolysis of the trilactone cycle of ferri-bacillibactin (ferri-BB) complex, leading to the formation of bacillibactin monomers and to cytosolic iron release, thus making iron available for metabolic use. Can also hydrolyze bacillibactin (BB), however the catalytic efficiency for ferri-BB hydrolysis is much higher than for BB. In Bacillus subtilis (strain 168), this protein is Ferri-bacillibactin esterase BesA (besA).